A 463-amino-acid polypeptide reads, in one-letter code: NADH-ubiquinone oxidoreductase chain 4 (463 aa).

13 consecutive transmembrane segments (helical) span residues 24–44 (LWAG…IVLN), 62–82 (TISA…LIAS), 98–118 (IIMI…LELI), 119–139 (LFYI…TRWG), 151–171 (FMFY…AIYI), 198–218 (WALS…HLWL), 232–252 (ILAA…IALF), 260–280 (LSLA…VICV), 285–305 (LKAL…AAIF), 310–330 (WGMN…SALF), 353–373 (LLLP…LGLP), 404–424 (VFGA…TPFT), and 442–462 (LHIL…IAWL).

Belongs to the complex I subunit 4 family.

It localises to the mitochondrion membrane. The catalysed reaction is a ubiquinone + NADH + 5 H(+)(in) = a ubiquinol + NAD(+) + 4 H(+)(out). Functionally, core subunit of the mitochondrial membrane respiratory chain NADH dehydrogenase (Complex I) that is believed to belong to the minimal assembly required for catalysis. Complex I functions in the transfer of electrons from NADH to the respiratory chain. The immediate electron acceptor for the enzyme is believed to be ubiquinone. The chain is NADH-ubiquinone oxidoreductase chain 4 (ND4) from Strongylocentrotus purpuratus (Purple sea urchin).